Consider the following 267-residue polypeptide: 3-methyl-2-oxobutanoate hydroxymethyltransferase (267 aa).

Positions 45 and 84 each coordinate Mg(2+). 3-methyl-2-oxobutanoate is bound by residues 45-46 (DS), D84, and K113. E115 lines the Mg(2+) pocket. E182 functions as the Proton acceptor in the catalytic mechanism.

It belongs to the PanB family. As to quaternary structure, homodecamer; pentamer of dimers. The cofactor is Mg(2+).

Its subcellular location is the cytoplasm. The catalysed reaction is 3-methyl-2-oxobutanoate + (6R)-5,10-methylene-5,6,7,8-tetrahydrofolate + H2O = 2-dehydropantoate + (6S)-5,6,7,8-tetrahydrofolate. It participates in cofactor biosynthesis; coenzyme A biosynthesis. In terms of biological role, catalyzes the reversible reaction in which hydroxymethyl group from 5,10-methylenetetrahydrofolate is transferred onto alpha-ketoisovalerate to form ketopantoate. The sequence is that of 3-methyl-2-oxobutanoate hydroxymethyltransferase from Saccharolobus islandicus (strain Y.G.57.14 / Yellowstone #1) (Sulfolobus islandicus).